We begin with the raw amino-acid sequence, 291 residues long: 2-C-methyl-D-erythritol 4-phosphate cytidylyltransferase (291 aa).

The interval 1–23 (MTERDFDTPVETPTVQPAPAQGA) is disordered.

The protein belongs to the IspD/TarI cytidylyltransferase family. IspD subfamily.

The catalysed reaction is 2-C-methyl-D-erythritol 4-phosphate + CTP + H(+) = 4-CDP-2-C-methyl-D-erythritol + diphosphate. It functions in the pathway isoprenoid biosynthesis; isopentenyl diphosphate biosynthesis via DXP pathway; isopentenyl diphosphate from 1-deoxy-D-xylulose 5-phosphate: step 2/6. Functionally, catalyzes the formation of 4-diphosphocytidyl-2-C-methyl-D-erythritol from CTP and 2-C-methyl-D-erythritol 4-phosphate (MEP). The polypeptide is 2-C-methyl-D-erythritol 4-phosphate cytidylyltransferase (Bifidobacterium longum (strain NCC 2705)).